We begin with the raw amino-acid sequence, 481 residues long: N-succinylglutamate 5-semialdehyde dehydrogenase (481 aa).

Position 206–211 (206–211) interacts with NAD(+); the sequence is GSARTG. Catalysis depends on residues Glu-229 and Cys-263.

Belongs to the aldehyde dehydrogenase family. AstD subfamily.

The catalysed reaction is N-succinyl-L-glutamate 5-semialdehyde + NAD(+) + H2O = N-succinyl-L-glutamate + NADH + 2 H(+). Its pathway is amino-acid degradation; L-arginine degradation via AST pathway; L-glutamate and succinate from L-arginine: step 4/5. Catalyzes the NAD-dependent reduction of succinylglutamate semialdehyde into succinylglutamate. The protein is N-succinylglutamate 5-semialdehyde dehydrogenase of Sphingopyxis alaskensis (strain DSM 13593 / LMG 18877 / RB2256) (Sphingomonas alaskensis).